The following is a 726-amino-acid chain: Catalase-peroxidase (726 aa).

Positions 90 to 213 form a cross-link, tryptophyl-tyrosyl-methioninium (Trp-Tyr) (with M-239); that stretch reads WHAAGTYRIG…LAAVQMGLIY (124 aa). Histidine 91 acts as the Proton acceptor in catalysis. Residues 213–239 constitute a cross-link (tryptophyl-tyrosyl-methioninium (Tyr-Met) (with W-90)); that stretch reads YVNPEGPNGNPDPLAAARDIRETFARM. Histidine 254 contacts heme b. The tract at residues 334–359 is disordered; the sequence is AHQWKPKHGAGANTVPDAHDPSKRHA.

This sequence belongs to the peroxidase family. Peroxidase/catalase subfamily. Homodimer or homotetramer. Heme b serves as cofactor. In terms of processing, formation of the three residue Trp-Tyr-Met cross-link is important for the catalase, but not the peroxidase activity of the enzyme.

The catalysed reaction is H2O2 + AH2 = A + 2 H2O. It carries out the reaction 2 H2O2 = O2 + 2 H2O. Bifunctional enzyme with both catalase and broad-spectrum peroxidase activity. This is Catalase-peroxidase from Bradyrhizobium sp. (strain BTAi1 / ATCC BAA-1182).